The primary structure comprises 361 residues: Alanine racemase 2 (361 aa).

Catalysis depends on lysine 30, which acts as the Proton acceptor; specific for D-alanine. N6-(pyridoxal phosphate)lysine is present on lysine 30. Arginine 122 is a substrate binding site. Catalysis depends on tyrosine 256, which acts as the Proton acceptor; specific for L-alanine. Substrate is bound at residue methionine 303.

It belongs to the alanine racemase family. Pyridoxal 5'-phosphate is required as a cofactor.

The catalysed reaction is L-alanine = D-alanine. It functions in the pathway amino-acid biosynthesis; D-alanine biosynthesis; D-alanine from L-alanine: step 1/1. Catalyzes the interconversion of L-alanine and D-alanine. May also act on other amino acids. This chain is Alanine racemase 2 (alr2), found in Staphylococcus aureus (strain Mu50 / ATCC 700699).